The primary structure comprises 151 residues: PTITNDGVSIAKEIELEDPYEKIGAELVKEVAKKTDDVAGDGTTTATVLAQALVKEGLRNVAAGANPLGLKRGIEKAVEKVTETLLKSAKEVETKEQIAATAGISAGDQSIGDLIAEAMDKVGNEGVITVEESNTFGLQLELTEGMRFDKG.

41-45 lines the ATP pocket; sequence DGTTT.

The protein belongs to the chaperonin (HSP60) family. Forms a cylinder of 14 subunits composed of two heptameric rings stacked back-to-back. Interacts with the co-chaperonin GroES.

It is found in the cytoplasm. The catalysed reaction is ATP + H2O + a folded polypeptide = ADP + phosphate + an unfolded polypeptide.. Its function is as follows. Together with its co-chaperonin GroES, plays an essential role in assisting protein folding. The GroEL-GroES system forms a nano-cage that allows encapsulation of the non-native substrate proteins and provides a physical environment optimized to promote and accelerate protein folding. The protein is Chaperonin GroEL of Mycobacteroides chelonae (Mycobacterium chelonae).